The sequence spans 353 residues: Ribosomal RNA small subunit methyltransferase C (353 aa).

The protein belongs to the methyltransferase superfamily. RsmC family. As to quaternary structure, monomer.

It localises to the cytoplasm. It catalyses the reaction guanosine(1207) in 16S rRNA + S-adenosyl-L-methionine = N(2)-methylguanosine(1207) in 16S rRNA + S-adenosyl-L-homocysteine + H(+). In terms of biological role, specifically methylates the guanine in position 1207 of 16S rRNA in the 30S particle. The sequence is that of Ribosomal RNA small subunit methyltransferase C from Marinomonas sp. (strain MWYL1).